The sequence spans 259 residues: Tegument protein UL51 homolog (259 aa).

A lipid anchor (S-palmitoyl cysteine; by host) is attached at Cys-9.

The protein belongs to the herpesviridae UL51 family. In terms of assembly, oligomerizes. Interacts with ORF53; this interaction mediates ORF53 incorporation to virions. Post-translationally, phosphorylated. In terms of processing, palmitoylation is necessary for Golgi localization.

It is found in the virion tegument. The protein resides in the host cytoplasm. The protein localises to the host Golgi apparatus. Its function is as follows. Plays several roles during the time course of infection, including egress of virus particles from the perinuclear space and secondary envelopment of cytoplasmic capsids that bud into specific trans-Golgi network (TGN)-derived membranes. In Varicella-zoster virus (strain Dumas) (HHV-3), this protein is Tegument protein UL51 homolog.